The following is a 30-amino-acid chain: Platelet factor 4 (30 aa).

It belongs to the intercrine alpha (chemokine CxC) family. As to quaternary structure, homotetramer. Interacts with TNFAIP6 (via Link domain). Interacts with CCR1. Interacts with CXCR3. Post-translationally, binds non-covalently to a proteoglycan molecule.

Its subcellular location is the secreted. Chemokine released during platelet aggregation that plays a role in different biological processes including hematopoiesis, cell proliferation, differentiation, and activation. Acts via different functional receptors including CCR1, CXCR3A or CXCR3B. Upon interaction with CXCR3A receptor, induces activated T-lymphocytes migration mediated via downstream Ras/extracellular signal-regulated kinase (ERK) signaling. Neutralizes the anticoagulant effect of heparin by binding more strongly to heparin than to the chondroitin-4-sulfate chains of the carrier molecule. Plays a role in the inhibition of hematopoiesis and in the maintenance of hematopoietic stem cell (HSC) quiescence. Chemotactic for neutrophils and monocytes via CCR1. Inhibits endothelial cell proliferation. In cooperation with toll-like receptor 8/TLR8, induces chromatin remodeling and activates inflammatory gene expression via the TBK1-IRF5 axis. In addition, induces myofibroblast differentiation and collagen synthesis in different precursor cells, including endothelial cells, by stimulating endothelial-to-mesenchymal transition. In Oryctolagus cuniculus (Rabbit), this protein is Platelet factor 4 (PF4).